The sequence spans 251 residues: uncharacterized protein (251 aa).

Residues 3-118 enclose the Response regulatory domain; the sequence is KVIICDDERI…QLEHILDILV (116 aa). Aspartate 55 is modified (4-aspartylphosphate). The HTH araC/xylS-type domain occupies 152-249; that stretch reads NQILSQIKQH…HMSPSDYNKQ (98 aa). 2 consecutive DNA-binding regions (H-T-H motif) follow at residues 169-190 and 216-239; these read LDLI…KEHV and HYEI…KKYL.

In terms of processing, phosphorylated by SERP2405.

It is found in the cytoplasm. Probable member of the two-component regulatory system SERP2405/SERP2406. This is an uncharacterized protein from Staphylococcus epidermidis (strain ATCC 35984 / DSM 28319 / BCRC 17069 / CCUG 31568 / BM 3577 / RP62A).